The primary structure comprises 459 residues: Cysteine--tRNA ligase (459 aa).

Cys-28 contributes to the Zn(2+) binding site. The 'HIGH' region motif lies at 30–40; the sequence is VTVYDLCHIGH. Zn(2+)-binding residues include Cys-209, His-234, and Glu-238. The 'KMSKS' region signature appears at 266-270; that stretch reads KMSKS. Residue Lys-269 participates in ATP binding.

It belongs to the class-I aminoacyl-tRNA synthetase family. In terms of assembly, monomer. Zn(2+) is required as a cofactor.

The protein localises to the cytoplasm. It carries out the reaction tRNA(Cys) + L-cysteine + ATP = L-cysteinyl-tRNA(Cys) + AMP + diphosphate. This Haemophilus influenzae (strain PittGG) protein is Cysteine--tRNA ligase.